The primary structure comprises 980 residues: Vacuolar protein sorting-associated protein 11 homolog (980 aa).

A CHCR repeat occupies 407-554 (YKETIGMLEP…GRDLLIHARD (148 aa)). The RING-type; atypical zinc finger occupies 803–843 (CSACDTPLQLPTVHFLCKHAYHVHCFESYNMDGSDKCPACQ). The span at 886–898 (TKKTKKSEAKKDP) shows a compositional bias: basic and acidic residues. The disordered stretch occupies residues 886 to 980 (TKKTKKSEAK…APAPSTNPFD (95 aa)). Composition is skewed to polar residues over residues 917–937 (TTIS…SRQR) and 947–960 (TNPF…TRLS).

This sequence belongs to the VPS11 family. In terms of assembly, probable core component of at least two putative endosomal tethering complexes, the homotypic fusion and vacuole protein sorting (HOPS) complex and the class C core vacuole/endosome tethering (CORVET) complex. Their common core is composed of the class C Vps proteins vps-11, vps-16 and vps-18, which in HOPS further associates with vps-33.1, vps-39 and vps-41 and in CORVET with vps-8 and vps-33.2.

It localises to the late endosome membrane. Its subcellular location is the lysosome membrane. In terms of biological role, plays a role in vesicle-mediated protein trafficking to lysosomal compartments including the endocytic membrane transport pathways. Believed to act as a core component of the putative HOPS and CORVET endosomal tethering complexes which are proposed to be involved in the rab-5-to-rab-7 endosome conversion probably implicating sand-1, and via binding SNAREs and SNARE complexes to mediate tethering and docking events during SNARE-mediated membrane fusion. The HOPS complex is proposed to be recruited to Rab7 on the late endosomal membrane and to regulate late endocytic, phagocytic and autophagic traffic towards lysosomes. Within the HOPS complex, contributes to the normal development of gut granules in embryonic and adult intestinal cells. The CORVET complex is proposed to function as a Rab5 effector to mediate early endosome fusion probably in specific endosome subpopulations. Required for fusion of endosomes and autophagosomes with lysosomes. Involved in cargo transport from early to late endosomes and required for the transition from early to late endosomes. Possibly has a role in clearance of apoptotic cells during programmed cell death. In Caenorhabditis elegans, this protein is Vacuolar protein sorting-associated protein 11 homolog.